The following is a 190-amino-acid chain: Elongation factor P-like protein (190 aa).

The protein belongs to the elongation factor P family.

This Psychromonas ingrahamii (strain DSM 17664 / CCUG 51855 / 37) protein is Elongation factor P-like protein.